The primary structure comprises 279 residues: S-methyl-5'-thioadenosine phosphorylase (279 aa).

Residues S28, 70–71 (RH), and 103–104 (SA) each bind phosphate. M202 contributes to the substrate binding site. T203 contacts phosphate. Residue 226-228 (DYD) participates in substrate binding.

The protein belongs to the PNP/MTAP phosphorylase family. MTAP subfamily. Homohexamer. Dimer of a homotrimer.

The catalysed reaction is S-methyl-5'-thioadenosine + phosphate = 5-(methylsulfanyl)-alpha-D-ribose 1-phosphate + adenine. It participates in amino-acid biosynthesis; L-methionine biosynthesis via salvage pathway; S-methyl-5-thio-alpha-D-ribose 1-phosphate from S-methyl-5'-thioadenosine (phosphorylase route): step 1/1. Functionally, catalyzes the reversible phosphorylation of S-methyl-5'-thioadenosine (MTA) to adenine and 5-methylthioribose-1-phosphate. Involved in the breakdown of MTA, a major by-product of polyamine biosynthesis. Responsible for the first step in the methionine salvage pathway after MTA has been generated from S-adenosylmethionine. Has broad substrate specificity with 6-aminopurine nucleosides as preferred substrates. The chain is S-methyl-5'-thioadenosine phosphorylase from Pyrobaculum aerophilum (strain ATCC 51768 / DSM 7523 / JCM 9630 / CIP 104966 / NBRC 100827 / IM2).